The following is a 352-amino-acid chain: Protein RecA (352 aa).

Gly67–Thr74 is an ATP binding site.

This sequence belongs to the RecA family.

It is found in the cytoplasm. In terms of biological role, can catalyze the hydrolysis of ATP in the presence of single-stranded DNA, the ATP-dependent uptake of single-stranded DNA by duplex DNA, and the ATP-dependent hybridization of homologous single-stranded DNAs. It interacts with LexA causing its activation and leading to its autocatalytic cleavage. This is Protein RecA from Klebsiella pneumoniae subsp. pneumoniae (strain ATCC 700721 / MGH 78578).